A 424-amino-acid polypeptide reads, in one-letter code: Serpin E3 (424 aa).

The signal sequence occupies residues 1–20; the sequence is MPPFLITLFLFHSCCLRANG. N46 is a glycosylation site (N-linked (GlcNAc...) asparagine). Positions 143–174 are disordered; it reads DLSEPNSTAIQTSEGASRETAGGGPSEGPGGW. A compositionally biased stretch (polar residues) spans 146-157; it reads EPNSTAIQTSEG. Gly residues predominate over residues 163-173; the sequence is AGGGPSEGPGG.

It belongs to the serpin family.

It is found in the secreted. In terms of biological role, probable serine protease inhibitor. The sequence is that of Serpin E3 (SERPINE3) from Homo sapiens (Human).